Consider the following 158-residue polypeptide: Transcriptional repressor NrdR (158 aa).

The segment at 1–22 (MRCPFCGSDDTQVKDSRPAEDN) is disordered. A zinc finger lies at 3 to 34 (CPFCGSDDTQVKDSRPAEDNSAIRRRRICPDC). Residues 11 to 22 (TQVKDSRPAEDN) are compositionally biased toward basic and acidic residues. Residues 49-139 (LTVLKKTGRK…VYRDFSHAED (91 aa)) enclose the ATP-cone domain.

It belongs to the NrdR family. Zn(2+) serves as cofactor.

Its function is as follows. Negatively regulates transcription of bacterial ribonucleotide reductase nrd genes and operons by binding to NrdR-boxes. This is Transcriptional repressor NrdR from Allorhizobium ampelinum (strain ATCC BAA-846 / DSM 112012 / S4) (Agrobacterium vitis (strain S4)).